Here is an 88-residue protein sequence, read N- to C-terminus: Beta-insect excitatory toxin BmKIT1 (88 aa).

The N-terminal stretch at 1-18 (MKFFLIFLVIFPIMGVLG) is a signal peptide. One can recognise an LCN-type CS-alpha/beta domain in the interval 20–83 (KNGYAVDSSG…IKDATKSYCD (64 aa)). 4 disulfides stabilise this stretch: Cys-34–Cys-55, Cys-40–Cys-60, Cys-44–Cys-62, and Cys-56–Cys-82. Ile-87 is modified (isoleucine amide).

Belongs to the long (4 C-C) scorpion toxin superfamily. Sodium channel inhibitor family. Beta subfamily. In terms of tissue distribution, expressed by the venom gland.

The protein resides in the secreted. Its function is as follows. Excitatory insect beta-toxins induce a spastic paralysis. They bind voltage-independently at site-4 of sodium channels (Nav) and shift the voltage of activation toward more negative potentials thereby affecting sodium channel activation and promoting spontaneous and repetitive firing. This toxin is active only on insects. This chain is Beta-insect excitatory toxin BmKIT1, found in Olivierus martensii (Manchurian scorpion).